The primary structure comprises 72 residues: SRY-related protein ADW2 (72 aa).

The segment at residues 1–69 (VKRPMNAFMV…KHMADYADYK (69 aa)) is a DNA-binding region (HMG box).

The protein resides in the nucleus. The sequence is that of SRY-related protein ADW2 from Alligator mississippiensis (American alligator).